The following is a 164-amino-acid chain: Transcription elongation factor GreA (164 aa).

Belongs to the GreA/GreB family.

Necessary for efficient RNA polymerase transcription elongation past template-encoded arresting sites. The arresting sites in DNA have the property of trapping a certain fraction of elongating RNA polymerases that pass through, resulting in locked ternary complexes. Cleavage of the nascent transcript by cleavage factors such as GreA or GreB allows the resumption of elongation from the new 3'terminus. GreA releases sequences of 2 to 3 nucleotides. The sequence is that of Transcription elongation factor GreA from Helicobacter pylori (strain Shi470).